Reading from the N-terminus, the 81-residue chain is MEKLTILLLVAAVLLSIQALNQEKHQRAKINLLSKRKPPAERWWRWGGCMAWFGLCSKDSECCSNSCDVTRCELMPFPPDW.

Positions methionine 1–alanine 19 are cleaved as a signal peptide. A propeptide spanning residues leucine 20–arginine 45 is cleaved from the precursor. 3 disulfides stabilise this stretch: cysteine 49/cysteine 63, cysteine 56/cysteine 67, and cysteine 62/cysteine 72.

It belongs to the conotoxin O2 superfamily. As to expression, expressed by the venom duct.

It localises to the secreted. Functionally, gamma-conotoxins may act on voltage-gated non-specific cation pacemaker channels (HCN). The protein is Gamma-conotoxin-like TxMEKL-0511 of Conus textile (Cloth-of-gold cone).